Consider the following 334-residue polypeptide: Holliday junction branch migration complex subunit RuvB (334 aa).

The large ATPase domain (RuvB-L) stretch occupies residues 4 to 184 (ADRLVSAGVI…FGIVQRLEFY (181 aa)). ATP contacts are provided by residues I23, R24, G65, K68, T69, T70, 131 to 133 (EDY), R174, Y184, and R221. Residue T69 participates in Mg(2+) binding. The segment at 185-255 (RVEDLQHIVG…VASRALDMLS (71 aa)) is small ATPAse domain (RuvB-S). The tract at residues 258 to 334 (SEGFDYMDRK…YKHFGITREG (77 aa)) is head domain (RuvB-H). DNA contacts are provided by R294, R313, and R318.

The protein belongs to the RuvB family. As to quaternary structure, homohexamer. Forms an RuvA(8)-RuvB(12)-Holliday junction (HJ) complex. HJ DNA is sandwiched between 2 RuvA tetramers; dsDNA enters through RuvA and exits via RuvB. An RuvB hexamer assembles on each DNA strand where it exits the tetramer. Each RuvB hexamer is contacted by two RuvA subunits (via domain III) on 2 adjacent RuvB subunits; this complex drives branch migration. In the full resolvosome a probable DNA-RuvA(4)-RuvB(12)-RuvC(2) complex forms which resolves the HJ.

It localises to the cytoplasm. The enzyme catalyses ATP + H2O = ADP + phosphate + H(+). In terms of biological role, the RuvA-RuvB-RuvC complex processes Holliday junction (HJ) DNA during genetic recombination and DNA repair, while the RuvA-RuvB complex plays an important role in the rescue of blocked DNA replication forks via replication fork reversal (RFR). RuvA specifically binds to HJ cruciform DNA, conferring on it an open structure. The RuvB hexamer acts as an ATP-dependent pump, pulling dsDNA into and through the RuvAB complex. RuvB forms 2 homohexamers on either side of HJ DNA bound by 1 or 2 RuvA tetramers; 4 subunits per hexamer contact DNA at a time. Coordinated motions by a converter formed by DNA-disengaged RuvB subunits stimulates ATP hydrolysis and nucleotide exchange. Immobilization of the converter enables RuvB to convert the ATP-contained energy into a lever motion, pulling 2 nucleotides of DNA out of the RuvA tetramer per ATP hydrolyzed, thus driving DNA branch migration. The RuvB motors rotate together with the DNA substrate, which together with the progressing nucleotide cycle form the mechanistic basis for DNA recombination by continuous HJ branch migration. Branch migration allows RuvC to scan DNA until it finds its consensus sequence, where it cleaves and resolves cruciform DNA. This is Holliday junction branch migration complex subunit RuvB from Erwinia tasmaniensis (strain DSM 17950 / CFBP 7177 / CIP 109463 / NCPPB 4357 / Et1/99).